Consider the following 243-residue polypeptide: Tryptophan synthase alpha chain (243 aa).

Active-site proton acceptor residues include glutamate 32 and aspartate 43.

It belongs to the TrpA family. In terms of assembly, tetramer of two alpha and two beta chains.

It is found in the plastid. Its subcellular location is the chloroplast. It carries out the reaction (1S,2R)-1-C-(indol-3-yl)glycerol 3-phosphate + L-serine = D-glyceraldehyde 3-phosphate + L-tryptophan + H2O. Its pathway is amino-acid biosynthesis; L-tryptophan biosynthesis; L-tryptophan from chorismate: step 5/5. The alpha subunit is responsible for the aldol cleavage of indoleglycerol phosphate to indole and glyceraldehyde 3-phosphate. The sequence is that of Tryptophan synthase alpha chain from Cyanidioschyzon merolae (strain NIES-3377 / 10D) (Unicellular red alga).